Consider the following 501-residue polypeptide: LIM domain-containing protein HDR3 (501 aa).

A disordered region spans residues 33–67; sequence GEANRRRPRVTAGEETTLWEEPVRPKKEEPPRHNN. Positions 53–67 are enriched in basic and acidic residues; that stretch reads EPVRPKKEEPPRHNN. UIM domains follow at residues 65-84 and 94-113; these read HNNE…DAKN and ENDE…NPYQ. The LIM zinc-binding domain maps to 131-191; it reads RVCGGCKHEI…KLCYKELHHP (61 aa). Residues 429–448 form a disordered region; it reads YASSSSSSCRPPPSKKGGIS.

In terms of assembly, interacts (via N-terminus) with GW6A (via C-terminus).

Its function is as follows. Ubiquitin receptor that functions as a positive regulator of grain size and weight. Functions in the same genetic pathway as GW6A to regulate grain size. Modulates grain size in a similar manner to GW6A, by altering cell proliferation in spikelet hulls. Interacts with and enhances the ubiquitination of GW6A. This stabilizes GW6A, delays protein degradation by the 26S proteasome and enhances GW6A histone acetyltransferase activity. This Oryza sativa subsp. japonica (Rice) protein is LIM domain-containing protein HDR3.